We begin with the raw amino-acid sequence, 753 residues long: MDPTHQSFRLYAEVLVSANINKILDYGIPAELEDRVTIGSVVKVPLQRKVTNDKYKFAIVLKIKDSSDFANVIQPIAGISYEGVTLPKDLIDLIFWISQYYFCPLGSTLSLFLPTVYSQTHSTKHQNNVFLGQNAERTQEIIKSIEDPHQIAVLRKLLKTTKPLTPKELIKKTDISTKILDSLSKQGFIRIVDSANLEIQDEQLQYFLPEPPTLTQEQIEAINTISQSLITTKFQTCLLFGVTGSGKTEVYLQVIRKARSLGKSVILLVPEVALTIQTLSFFKMHFGAEVGVLHYKLSESERTQTWHKAARGLINIIIGPRSAIFCPMQNLGLIIVDEEHDGAYKQSDLPPFYQARDVAVMRGKFTNATVILGSATPSLESYTNALSKKYTLSVLSKRASTSIPTKVSLIDMNREMEKTRKKILFSPTVIRSIEQRLAVGEQTIIFFNRRGFHTNVSCSSCKYTLKCPHCDMILTFHKTERILLCHLCNTRLSKPITSCPQCHGTMTLQYRGAGTEKIEALLQDFFPTVRTIRLDSDTTRYRGSHDALIKQFATGKADILIGTQMIAKGMHFPAVTLSVVLSGDSGLYIPDFRAAEQVFQLITQVTGRSGRSYLPGEVLIQTFLPQNSTISHALAQDFPAFYKEEILGRKACNYPPFTRLIRCIFLGKCAEYTLQEAQRMHELIKQNLDAQASLMDISPCGHFKVKDLFHYQFLIKTRNILTVNKQLQDAFSAAKLSSKVRCIVDIDPITTFF.

Positions serine 228–leucine 395 constitute a Helicase ATP-binding domain. Glycine 241–threonine 248 contributes to the ATP binding site. Residues aspartate 337–histidine 340 carry the DEAH box motif. Positions 458, 461, 467, 470, 485, 488, 499, and 502 each coordinate Zn(2+). The Helicase C-terminal domain occupies arginine 491–isoleucine 646.

This sequence belongs to the helicase family. PriA subfamily. Component of the replication restart primosome. The cofactor is Zn(2+).

It catalyses the reaction Couples ATP hydrolysis with the unwinding of duplex DNA by translocating in the 3'-5' direction.. The catalysed reaction is ATP + H2O = ADP + phosphate + H(+). Functionally, initiates the restart of stalled replication forks, which reloads the replicative helicase on sites other than the origin of replication. Recognizes and binds to abandoned replication forks and remodels them to uncover a helicase loading site. Promotes assembly of the primosome at these replication forks. The sequence is that of Replication restart protein PriA from Chlamydia muridarum (strain MoPn / Nigg).